We begin with the raw amino-acid sequence, 140 residues long: uncharacterized protein (140 aa).

3 consecutive transmembrane segments (helical) span residues isoleucine 20–glycine 42, phenylalanine 88–leucine 110, and isoleucine 115–glutamine 137.

The protein resides in the cell membrane. This is an uncharacterized protein from Archaeoglobus fulgidus (strain ATCC 49558 / DSM 4304 / JCM 9628 / NBRC 100126 / VC-16).